A 344-amino-acid chain; its full sequence is MTARGGRAPLARRAMVYGVVGLAAIAGVAMWSGASWHRGTGAASDSPDAPVAGGLAAAPPQAAVPASAGLPPSLAGSSAPRLPLDAGGHLAKSRAVRDFFDYCLTAQSDLSAAALDAFVVREIAAQLDGTVAQVEALDVWHRYRAYLDALAKLRDAGAVDKSDLGALQLALDQRASIAYRTLGDWSQPFFGAEQWRQRYDLARLKITRDPTLTDAQKAERLAALEQQMPADERAAQKRIDKQRAAIDQIAQLQKSGATPDAMRAQLTQTLGPEAAARVAQMQQDDASWQSRYTDYAAQRAQIESAGLSPQDRDAQITALRQRVFTKPGEAVRAASLDRGAGSAR.

Residues 14 to 34 (AMVYGVVGLAAIAGVAMWSGA) form a helical membrane-spanning segment.

The protein belongs to the lipase chaperone family.

Its subcellular location is the cell inner membrane. May be involved in the folding of the extracellular lipase during its passage through the periplasm. The chain is Lipase chaperone from Burkholderia lata (strain ATCC 17760 / DSM 23089 / LMG 22485 / NCIMB 9086 / R18194 / 383).